A 125-amino-acid polypeptide reads, in one-letter code: MAITKEDVLEFISNLSVLELSELVKEFEEKFGVSAAPVMVAGGAVAGGAAEAAEEKTEFNLVLVDSGDKKINVIKVVRALTGLGLKEAKDAVEGTPSVLKEGISKDEAEAAKKELEEAGAKVELK.

Belongs to the bacterial ribosomal protein bL12 family. As to quaternary structure, homodimer. Part of the ribosomal stalk of the 50S ribosomal subunit. Forms a multimeric L10(L12)X complex, where L10 forms an elongated spine to which 2 to 4 L12 dimers bind in a sequential fashion. Binds GTP-bound translation factors.

Functionally, forms part of the ribosomal stalk which helps the ribosome interact with GTP-bound translation factors. Is thus essential for accurate translation. This is Large ribosomal subunit protein bL12 from Campylobacter curvus (strain 525.92).